Consider the following 449-residue polypeptide: Glycine receptor subunit alpha-2 (449 aa).

An N-terminal signal peptide occupies residues 1–27; that stretch reads MTRPSVKLLTTLLACLMEMLNFRVSSG. Residues 28 to 255 lie on the Extracellular side of the membrane; sequence KDPDLLSSSS…FHLERQMGYY (228 aa). N-linked (GlcNAc...) asparagine glycosylation occurs at Asn70. Glycine-binding residues include Arg97 and Ser161. Arg97 is a strychnine binding site. Cys170 and Cys184 are disulfide-bonded. Zn(2+)-binding residues include Glu224 and Asp226. Cysteines 230 and 241 form a disulfide. Residue Thr236 coordinates glycine. His247 lines the Zn(2+) pocket. A helical membrane pass occupies residues 256-276; the sequence is LIQMYIPSLLIVILSWVSFWI. The Cytoplasmic segment spans residues 277-282; it reads NMDAAP. The chain crosses the membrane as a helical span at residues 283 to 302; that stretch reads ARVALGITTVLTMTTQSSGS. Topologically, residues 303-313 are extracellular; sequence RASLPKVSYVK. The helical transmembrane segment at 314 to 334 threads the bilayer; that stretch reads AIDIWMAVCLLFVFAALLEYA. Over 335–420 the chain is Cytoplasmic; it reads GVNFVSRQQK…RAKRIDTISR (86 aa). A helical membrane pass occupies residues 421–441; it reads AAFPLAFLIFNVFYWITYKII. Residues 442–449 are Extracellular-facing; it reads RHESARKD.

Belongs to the ligand-gated ion channel (TC 1.A.9) family.

The protein localises to the postsynaptic cell membrane. Its subcellular location is the synapse. It is found in the cell membrane. It localises to the cell projection. It carries out the reaction chloride(in) = chloride(out). Its activity is regulated as follows. Channel opening is triggered by extracellular glycine. Channel opening is also triggered by taurine and beta-alanine. Inhibited by strychnine. Its function is as follows. Subunit of heteromeric glycine-gated chloride channels. Plays a role in synaptic plasticity. Contributes to the generation of inhibitory postsynaptic currents, and is involved in the down-regulation of neuronal excitability. In Danio rerio (Zebrafish), this protein is Glycine receptor subunit alpha-2 (glra2).